A 350-amino-acid chain; its full sequence is 2-oxoglutarate-dependent ethylene/succinate-forming enzyme (350 aa).

Residues 166-286 (GWHHMRVLRF…RFACAYFHEP (121 aa)) enclose the Fe2OG dioxygenase domain. His-189 and His-268 together coordinate Fe cation.

It belongs to the iron/ascorbate-dependent oxidoreductase family. As to quaternary structure, monomer. It depends on Fe(2+) as a cofactor.

The enzyme catalyses 2-oxoglutarate + O2 + 2 H(+) = ethene + 3 CO2 + H2O. It carries out the reaction L-arginine + 2-oxoglutarate + O2 = guanidine + L-glutamate 5-semialdehyde + succinate + CO2. It participates in alkene biosynthesis; ethylene biosynthesis via 2-oxoglutarate. Functionally, simultaneously catalyzes two reactions, namely formation of ethylene and of succinate from 2-oxoglutarate. The chain is 2-oxoglutarate-dependent ethylene/succinate-forming enzyme (efe) from Pseudomonas amygdali pv. sesami (Pseudomonas syringae pv. sesami).